A 367-amino-acid chain; its full sequence is Protein-glutamate methylesterase/protein-glutamine glutaminase 2 (367 aa).

The Response regulatory domain occupies 3 to 120 (SVVVVDDSAF…SLDIVRIEND (118 aa)). D54 is modified (4-aspartylphosphate). The tract at residues 132–174 (RMLRTPRPVRPAPTASAPAQTAQVASAAPATAPSRPAMPATRA) is disordered. Residues 143–174 (APTASAPAQTAQVASAAPATAPSRPAMPATRA) are compositionally biased toward low complexity. Positions 175 to 367 (SRPVRDVVAI…AAAIMNGLYK (193 aa)) constitute a CheB-type methylesterase domain. Residues S187, H214, and D310 contribute to the active site.

Belongs to the CheB family. Post-translationally, phosphorylated by CheA. Phosphorylation of the N-terminal regulatory domain activates the methylesterase activity.

It is found in the cytoplasm. It catalyses the reaction [protein]-L-glutamate 5-O-methyl ester + H2O = L-glutamyl-[protein] + methanol + H(+). It carries out the reaction L-glutaminyl-[protein] + H2O = L-glutamyl-[protein] + NH4(+). In terms of biological role, involved in chemotaxis. Part of a chemotaxis signal transduction system that modulates chemotaxis in response to various stimuli. Catalyzes the demethylation of specific methylglutamate residues introduced into the chemoreceptors (methyl-accepting chemotaxis proteins or MCP) by CheR. Also mediates the irreversible deamidation of specific glutamine residues to glutamic acid. This is Protein-glutamate methylesterase/protein-glutamine glutaminase 2 from Nitratidesulfovibrio vulgaris (strain ATCC 29579 / DSM 644 / CCUG 34227 / NCIMB 8303 / VKM B-1760 / Hildenborough) (Desulfovibrio vulgaris).